Consider the following 391-residue polypeptide: Transcription factor TCP3 (391 aa).

Positions 1–34 (MAPDNDHFLDSPSPPLLEMRHHQSATENGGGCGE) are disordered. In terms of domain architecture, TCP spans 49 to 107 (RKDRHSKVCTAKGPRDRRVRLSAPTAIQFYDVQDRLGFDRPSKAVDWLITKAKSAIDDL). 3 disordered regions span residues 122-168 (HAAA…PASM), 317-345 (HHHHHHHQQSMTTDDLHHHHPYHIPPGIH), and 363-391 (FRIPARFQGEQEEHGGDNKPSSASSDSRH). A compositionally biased stretch (polar residues) spans 381 to 391 (KPSSASSDSRH).

Interacts with SPL. Interacts with KIN10; KIN11 and FLZ3. As to expression, expressed in cotyledons, particularly in the vascular region, in leaves, roots, buds, flowers and immature siliques.

The protein localises to the nucleus. Its function is as follows. Plays a pivotal role in the control of morphogenesis of shoot organs by negatively regulating the expression of boundary-specific genes such as CUC genes, probably through the induction of miRNA (e.g. miR164). Participates in ovule development. In Arabidopsis thaliana (Mouse-ear cress), this protein is Transcription factor TCP3 (TCP3).